Reading from the N-terminus, the 113-residue chain is UPF0122 protein SSU98_0878 (113 aa).

This sequence belongs to the UPF0122 family.

Its function is as follows. Might take part in the signal recognition particle (SRP) pathway. This is inferred from the conservation of its genetic proximity to ftsY/ffh. May be a regulatory protein. This chain is UPF0122 protein SSU98_0878, found in Streptococcus suis (strain 98HAH33).